The primary structure comprises 536 residues: Lysosomal acid glucosylceramidase (536 aa).

Residues 1 to 39 (MELSSPSREECPRPQGRVGIMAASLMGLLLLQAASWASG) form the signal peptide. Disulfide bonds link Cys-43–Cys-55 and Cys-57–Cys-62. Asn-58, Asn-98, and Asn-185 each carry an N-linked (GlcNAc...) asparagine glycan. The Proton donor role is filled by Glu-274. Residue Asn-309 is glycosylated (N-linked (GlcNAc...) asparagine). Residue Glu-379 is the Nucleophile of the active site. A glycan (N-linked (GlcNAc...) asparagine) is linked at Asn-501.

This sequence belongs to the glycosyl hydrolase 30 family. Interacts with saposin-C. Interacts with SCARB2. Interacts with TCP1. Interacts with GRN; this interaction prevents aggregation of GBA1-SCARB2 complex via interaction with HSPA1A upon stress.

The protein localises to the lysosome membrane. It catalyses the reaction a beta-D-glucosyl-(1&lt;-&gt;1')-N-acylsphing-4-enine + H2O = an N-acylsphing-4-enine + D-glucose. The catalysed reaction is a beta-D-galactosyl-(1&lt;-&gt;1')-N-acylsphing-4-enine + H2O = an N-acylsphing-4-enine + D-galactose. The enzyme catalyses cholesteryl 3-beta-D-glucoside + H2O = cholesterol + D-glucose. It carries out the reaction a beta-D-glucosyl-(1&lt;-&gt;1')-N-acylsphing-4-enine + cholesterol = cholesteryl 3-beta-D-glucoside + an N-acylsphing-4-enine. It catalyses the reaction beta-D-glucosyl-N-(9Z-octadecenoyl)-sphing-4E-enine + cholesterol = N-(9Z-octadecenoyl)-sphing-4-enine + cholesteryl 3-beta-D-glucoside. The catalysed reaction is beta-D-glucosyl-N-octanoylsphing-4E-enine + cholesterol = N-octanoylsphing-4-enine + cholesteryl 3-beta-D-glucoside. The enzyme catalyses beta-D-glucosyl-N-dodecanoylsphing-4-enine + cholesterol = N-dodecanoylsphing-4-enine + cholesteryl 3-beta-D-glucoside. It carries out the reaction beta-D-glucosyl-(1&lt;-&gt;1)-N-octadecanoylsphing-4-enine + cholesterol = N-octadecanoylsphing-4-enine + cholesteryl 3-beta-D-glucoside. It catalyses the reaction beta-D-glucosyl-(1&lt;-&gt;1')-N-(15Z-tetracosenoyl)-sphing-4-enine + cholesterol = N-(15Z-tetracosenoyl)-sphing-4-enine + cholesteryl 3-beta-D-glucoside. The catalysed reaction is a beta-D-galactosyl-(1&lt;-&gt;1')-N-acylsphing-4-enine + cholesterol = cholesteryl 3-beta-D-galactoside + an N-acylsphing-4-enine. The enzyme catalyses 1-(beta-D-galactosyl)-N-dodecanoylsphing-4-enine + cholesterol = cholesteryl 3-beta-D-galactoside + N-dodecanoylsphing-4-enine. It carries out the reaction a beta-D-xylosyl-(1&lt;-&gt;1')-N-acylsphing-4-enine + cholesterol = cholesteryl 3-beta-D-xyloside + an N-acylsphing-4-enine. It catalyses the reaction beta-D-xylosyl-(1&lt;-&gt;1')-N-(9Z-octadecenoyl)-sphing-4-enine + cholesterol = cholesteryl 3-beta-D-xyloside + N-(9Z-octadecenoyl)-sphing-4-enine. It participates in steroid metabolism; cholesterol metabolism. Its pathway is sphingolipid metabolism. Glucosylceramidase that catalyzes, within the lysosomal compartment, the hydrolysis of glucosylceramides/GlcCers (such as beta-D-glucosyl-(1&lt;-&gt;1')-N-acylsphing-4-enine) into free ceramides (such as N-acylsphing-4-enine) and glucose. Plays a central role in the degradation of complex lipids and the turnover of cellular membranes. Through the production of ceramides, participates in the PKC-activated salvage pathway of ceramide formation. Catalyzes the glucosylation of cholesterol, through a transglucosylation reaction where glucose is transferred from GlcCer to cholesterol. GlcCer containing mono-unsaturated fatty acids (such as beta-D-glucosyl-N-(9Z-octadecenoyl)-sphing-4-enine) are preferred as glucose donors for cholesterol glucosylation when compared with GlcCer containing same chain length of saturated fatty acids (such as beta-D-glucosyl-N-octadecanoyl-sphing-4-enine). Under specific conditions, may alternatively catalyze the reverse reaction, transferring glucose from cholesteryl 3-beta-D-glucoside to ceramide. Can also hydrolyze cholesteryl 3-beta-D-glucoside producing glucose and cholesterol. Catalyzes the hydrolysis of galactosylceramides/GalCers (such as beta-D-galactosyl-(1&lt;-&gt;1')-N-acylsphing-4-enine), as well as the transfer of galactose between GalCers and cholesterol in vitro, but with lower activity than with GlcCers. Contrary to GlcCer and GalCer, xylosylceramide/XylCer (such as beta-D-xyosyl-(1&lt;-&gt;1')-N-acylsphing-4-enine) is not a good substrate for hydrolysis, however it is a good xylose donor for transxylosylation activity to form cholesteryl 3-beta-D-xyloside. This chain is Lysosomal acid glucosylceramidase (GBA1), found in Sus scrofa (Pig).